We begin with the raw amino-acid sequence, 747 residues long: Endoglucanase D (747 aa).

An N-terminal signal peptide occupies residues Met1–Ala39. Glu208 functions as the Proton donor in the catalytic mechanism. Glu349 acts as the Nucleophile in catalysis. Positions Ala456–Ser475 are disordered. Fibronectin type-III domains follow at residues Ala456–Gly543 and Val552–Asp639. A compositionally biased stretch (polar residues) spans Pro465–Ser475. One can recognise a CBM2 domain in the interval Pro638 to Arg747.

It belongs to the glycosyl hydrolase 5 (cellulase A) family.

It catalyses the reaction Endohydrolysis of (1-&gt;4)-beta-D-glucosidic linkages in cellulose, lichenin and cereal beta-D-glucans.. It participates in glycan metabolism; cellulose degradation. This Cellulomonas fimi protein is Endoglucanase D (cenD).